The sequence spans 465 residues: Cysteine--tRNA ligase (465 aa).

Cysteine 28 is a Zn(2+) binding site. A 'HIGH' region motif is present at residues 30 to 40 (PTVYNYIHIGN). Zn(2+) contacts are provided by cysteine 208, histidine 233, and glutamate 237. The 'KMSKS' region signature appears at 265 to 269 (KMSKS). ATP is bound at residue lysine 268.

This sequence belongs to the class-I aminoacyl-tRNA synthetase family. In terms of assembly, monomer. Zn(2+) serves as cofactor.

Its subcellular location is the cytoplasm. The catalysed reaction is tRNA(Cys) + L-cysteine + ATP = L-cysteinyl-tRNA(Cys) + AMP + diphosphate. The sequence is that of Cysteine--tRNA ligase from Exiguobacterium sibiricum (strain DSM 17290 / CCUG 55495 / CIP 109462 / JCM 13490 / 255-15).